We begin with the raw amino-acid sequence, 255 residues long: Geranylgeranylglyceryl phosphate synthase (255 aa).

Residues D31 and S60 each coordinate Mg(2+). Sn-glycerol 1-phosphate-binding positions include 179 to 185, 211 to 212, and 233 to 234; these read YLEAGSG, GG, and GT.

It belongs to the GGGP/HepGP synthase family. Group II subfamily. It depends on Mg(2+) as a cofactor.

The protein localises to the cytoplasm. It catalyses the reaction sn-glycerol 1-phosphate + (2E,6E,10E)-geranylgeranyl diphosphate = sn-3-O-(geranylgeranyl)glycerol 1-phosphate + diphosphate. Its pathway is membrane lipid metabolism; glycerophospholipid metabolism. In terms of biological role, prenyltransferase that catalyzes the transfer of the geranylgeranyl moiety of geranylgeranyl diphosphate (GGPP) to the C3 hydroxyl of sn-glycerol-1-phosphate (G1P). This reaction is the first ether-bond-formation step in the biosynthesis of archaeal membrane lipids. The protein is Geranylgeranylglyceryl phosphate synthase of Methanothrix thermoacetophila (strain DSM 6194 / JCM 14653 / NBRC 101360 / PT) (Methanosaeta thermophila).